We begin with the raw amino-acid sequence, 55 residues long: MSRKKKVLVKLVSSAGTGVFWVKQRNPKTQTEKLSFRKYDPKVRKHVQFTEAKIK.

It belongs to the bacterial ribosomal protein bL33 family.

This Orientia tsutsugamushi (strain Boryong) (Rickettsia tsutsugamushi) protein is Large ribosomal subunit protein bL33.